The primary structure comprises 264 residues: Thymidylate synthase (264 aa).

Arg-21 serves as a coordination point for dUMP. Residue His-51 coordinates (6R)-5,10-methylene-5,6,7,8-tetrahydrofolate. DUMP is bound at residue 126–127 (RR). The active-site Nucleophile is Cys-146. DUMP-binding positions include 166–169 (RSCD), Asn-177, and 207–209 (HLY). Asp-169 provides a ligand contact to (6R)-5,10-methylene-5,6,7,8-tetrahydrofolate. Ala-263 lines the (6R)-5,10-methylene-5,6,7,8-tetrahydrofolate pocket.

This sequence belongs to the thymidylate synthase family. Bacterial-type ThyA subfamily. As to quaternary structure, homodimer.

It localises to the cytoplasm. It catalyses the reaction dUMP + (6R)-5,10-methylene-5,6,7,8-tetrahydrofolate = 7,8-dihydrofolate + dTMP. The protein operates within pyrimidine metabolism; dTTP biosynthesis. In terms of biological role, catalyzes the reductive methylation of 2'-deoxyuridine-5'-monophosphate (dUMP) to 2'-deoxythymidine-5'-monophosphate (dTMP) while utilizing 5,10-methylenetetrahydrofolate (mTHF) as the methyl donor and reductant in the reaction, yielding dihydrofolate (DHF) as a by-product. This enzymatic reaction provides an intracellular de novo source of dTMP, an essential precursor for DNA biosynthesis. The sequence is that of Thymidylate synthase from Pectobacterium atrosepticum (strain SCRI 1043 / ATCC BAA-672) (Erwinia carotovora subsp. atroseptica).